A 696-amino-acid polypeptide reads, in one-letter code: Potassium voltage-gated channel subfamily KQT member 4 (696 aa).

The tract at residues 1–20 is disordered; that stretch reads MAEAPPRRLGLGPPPGDAPR. The Cytoplasmic portion of the chain corresponds to 1 to 97; that stretch reads MAEAPPRRLG…VYNVLERPRG (97 aa). Arginine 94 serves as a coordination point for a 1,2-diacyl-sn-glycero-3-phospho-(1D-myo-inositol-4,5-bisphosphate). Residues 98-119 traverse the membrane as a helical segment; it reads WAFVYHVFIFLLVFSCLVLSVL. The Extracellular portion of the chain corresponds to 120–130; it reads STIQEHQELAN. Residues 131 to 153 form a helical membrane-spanning segment; the sequence is ECLLILEFVMIVVFGLEYIIRVW. The Cytoplasmic segment spans residues 154-169; it reads SAGCCCRYRGWQGRFR. Residues 170–192 form a helical membrane-spanning segment; the sequence is FARKPFCVIDFIVFVASVAVIAA. Residue lysine 173 coordinates a 1,2-diacyl-sn-glycero-3-phospho-(1D-myo-inositol-4,5-bisphosphate). Over 193–203 the chain is Extracellular; the sequence is GTQGNIFATSA. The helical; Voltage-sensor transmembrane segment at 204–224 threads the bilayer; it reads LRSMRFLQILRMVRMDRRGGT. A 1,2-diacyl-sn-glycero-3-phospho-(1D-myo-inositol-4,5-bisphosphate)-binding residues include arginine 220, arginine 221, lysine 226, and serine 236. Over 225 to 236 the chain is Cytoplasmic; the sequence is WKLLGSVVYAHS. A helical transmembrane segment spans residues 237–259; it reads KELITAWYIGFLVLIFASFLVYL. The Extracellular portion of the chain corresponds to 260–271; that stretch reads AEKDANSDFSSY. The segment at residues 272 to 293 is an intramembrane region (pore-forming); it reads ADSLWWGTITLTTIGYGDKTPH. Threonine 294 is a topological domain (extracellular). Residues 295–323 traverse the membrane as a helical segment; the sequence is WLGRVLAAGFALLGISFFALPAGILGSGF. At 324-696 the chain is on the cytoplasmic side; that stretch reads ALKVQEQHRQ…ISRSVSTNMD (373 aa). Residues histidine 331 and lysine 334 each contribute to the a 1,2-diacyl-sn-glycero-3-phospho-(1D-myo-inositol-4,5-bisphosphate) site. The interval 343–352 is interaction with CALM; that stretch reads AANLIQAAWR. A disordered region spans residues 445–484; it reads SSQKRTGPSKQHLAPPPIPTSPSSEQVGEASSPSKVQKSW. Polar residues predominate over residues 465–484; it reads SPSSEQVGEASSPSKVQKSW. The interval 536-550 is interaction with CALM; sequence RSVRILKFLVAKRKF. The interval 547 to 651 is C-terminal assembly domain (tetramerization); that stretch reads KRKFKETLRP…SRCLRSGTSA (105 aa). Residues 589-609 are disordered; the sequence is GRGPGDRKTREKGDKGPSDTE. A compositionally biased stretch (basic and acidic residues) spans 592-606; sequence PGDRKTREKGDKGPS. Positions 610–645 form a coiled coil; the sequence is AVDEISMMGRVVKVEKQVQSIEHKLDLLLGFYSRCL.

Belongs to the potassium channel family. KQT (TC 1.A.1.15) subfamily. Kv7.4/KCNQ4 sub-subfamily. As to quaternary structure, homotetramer. Interacts (via C-terminus) with calmodulin; forms a heterooctameric structure (with 4:4 KCNQ1:CALM stoichiometry); the interaction is calcium-independent, constitutive, participates in the proper assembly of a functional channel. The interaction with calcium-free CALM controls channel trafficking whereas interaction with calcium-bound CALM regulates channel gating. May form a functional heteromultimeric channel with KCNQ3. Interacts with HSP90AB1; promotes cell surface expression of KCNQ4. In terms of tissue distribution, in the inner ear expressed in the outer sensory hair cells of the cochlea and in type I hair cells of the vestibular organs. Also expressed in the postsynaptic membrane of the calyx nerve endings innervating type I cells. In the brain expressed in neurons of many, but not all, nuclei of the central auditory pathway. Absent from most other brain regions.

Its subcellular location is the basal cell membrane. The catalysed reaction is K(+)(in) = K(+)(out). Its activity is regulated as follows. Two molecules of phosphatidylinositol-4,5-bisphosphate (PIP2-I and PIP2-II) are essential to activate KCNQ4 channel by inducing the coupling of the voltage-sensing domain (VSD) and the pore-forming domain (PD). Upon channel activation, PIP2-I and PIP2-II disrupt the VSD-calmodulin/CALM interaction, causing the release of CALM from the VSD which triggers the opening of the gate. Calcium suppresses KCNQ4 channel current through calcium-bound CALM C-terminus. Therefore CALM acts as calcium sensor that controls channel activity. Its function is as follows. Pore-forming subunit of the voltage-gated potassium (Kv) channel involved in the regulation of sensory cells excitability in the cochlea. KCNQ4/Kv7.4 channel is composed of 4 pore-forming subunits assembled as tetramers. Promotes the outflow of potassium ions in the repolarization phase of action potential which plays a role in regulating membrane potential of excitable cells. The channel conducts a slowly activating and deactivating current. Current often shows some inward rectification at positive potentials. Channel may be selectively permeable in vitro to other cations besides potassium, in decreasing order of affinity K(+) = Rb(+) &gt; Cs(+) &gt; Na(+). Important for normal physiological function of inner ear such as sensory perception of sound. This chain is Potassium voltage-gated channel subfamily KQT member 4, found in Mus musculus (Mouse).